A 445-amino-acid polypeptide reads, in one-letter code: Enolase 1 (445 aa).

Residues H164 and E173 each coordinate substrate. The active-site Proton donor is the E216. Residues D251, E301, and D328 each contribute to the Mg(2+) site. Substrate contacts are provided by E301 and D328. K353 acts as the Proton acceptor in catalysis. Residues 380–383 and K404 each bind substrate; that span reads SHRS.

Belongs to the enolase family. As to quaternary structure, homodimer. Mg(2+) is required as a cofactor.

It localises to the cytoplasm. It catalyses the reaction (2R)-2-phosphoglycerate = phosphoenolpyruvate + H2O. The protein operates within carbohydrate degradation; glycolysis; pyruvate from D-glyceraldehyde 3-phosphate: step 4/5. The sequence is that of Enolase 1 (ENO1) from Hevea brasiliensis (Para rubber tree).